We begin with the raw amino-acid sequence, 264 residues long: S-adenosylmethionine decarboxylase proenzyme (264 aa).

The active-site Schiff-base intermediate with substrate; via pyruvic acid is the serine 112. The residue at position 112 (serine 112) is a Pyruvic acid (Ser); by autocatalysis. Catalysis depends on histidine 117, which acts as the Proton acceptor; for processing activity. Residue cysteine 140 is the Proton donor; for catalytic activity of the active site.

This sequence belongs to the prokaryotic AdoMetDC family. Type 2 subfamily. In terms of assembly, heterooctamer of four alpha and four beta chains arranged as a tetramer of alpha/beta heterodimers. The cofactor is pyruvate. In terms of processing, is synthesized initially as an inactive proenzyme. Formation of the active enzyme involves a self-maturation process in which the active site pyruvoyl group is generated from an internal serine residue via an autocatalytic post-translational modification. Two non-identical subunits are generated from the proenzyme in this reaction, and the pyruvate is formed at the N-terminus of the alpha chain, which is derived from the carboxyl end of the proenzyme. The post-translation cleavage follows an unusual pathway, termed non-hydrolytic serinolysis, in which the side chain hydroxyl group of the serine supplies its oxygen atom to form the C-terminus of the beta chain, while the remainder of the serine residue undergoes an oxidative deamination to produce ammonia and the pyruvoyl group blocking the N-terminus of the alpha chain.

The catalysed reaction is S-adenosyl-L-methionine + H(+) = S-adenosyl 3-(methylsulfanyl)propylamine + CO2. It participates in amine and polyamine biosynthesis; S-adenosylmethioninamine biosynthesis; S-adenosylmethioninamine from S-adenosyl-L-methionine: step 1/1. In terms of biological role, catalyzes the decarboxylation of S-adenosylmethionine to S-adenosylmethioninamine (dcAdoMet), the propylamine donor required for the synthesis of the polyamines spermine and spermidine from the diamine putrescine. In Enterobacter sp. (strain 638), this protein is S-adenosylmethionine decarboxylase proenzyme.